We begin with the raw amino-acid sequence, 204 residues long: Ribosomal RNA small subunit methyltransferase G (204 aa).

Residues Gly76, Leu81, 127–128, and Arg140 contribute to the S-adenosyl-L-methionine site; that span reads IE.

It belongs to the methyltransferase superfamily. RNA methyltransferase RsmG family.

The protein resides in the cytoplasm. It catalyses the reaction guanosine(527) in 16S rRNA + S-adenosyl-L-methionine = N(7)-methylguanosine(527) in 16S rRNA + S-adenosyl-L-homocysteine. Its function is as follows. Specifically methylates the N7 position of guanine in position 527 of 16S rRNA. The chain is Ribosomal RNA small subunit methyltransferase G from Francisella philomiragia subsp. philomiragia (strain ATCC 25017 / CCUG 19701 / FSC 153 / O#319-036).